The sequence spans 627 residues: 1-deoxy-D-xylulose-5-phosphate synthase (627 aa).

Thiamine diphosphate-binding positions include histidine 76 and 117 to 119; that span reads SHA. Position 148 (aspartate 148) interacts with Mg(2+). Residues 149 to 150, asparagine 178, phenylalanine 288, and glutamate 370 each bind thiamine diphosphate; that span reads GA. Asparagine 178 is a Mg(2+) binding site.

Belongs to the transketolase family. DXPS subfamily. Homodimer. It depends on Mg(2+) as a cofactor. The cofactor is thiamine diphosphate.

The enzyme catalyses D-glyceraldehyde 3-phosphate + pyruvate + H(+) = 1-deoxy-D-xylulose 5-phosphate + CO2. Its pathway is metabolic intermediate biosynthesis; 1-deoxy-D-xylulose 5-phosphate biosynthesis; 1-deoxy-D-xylulose 5-phosphate from D-glyceraldehyde 3-phosphate and pyruvate: step 1/1. Catalyzes the acyloin condensation reaction between C atoms 2 and 3 of pyruvate and glyceraldehyde 3-phosphate to yield 1-deoxy-D-xylulose-5-phosphate (DXP). This chain is 1-deoxy-D-xylulose-5-phosphate synthase, found in Cutibacterium acnes (strain DSM 16379 / KPA171202) (Propionibacterium acnes).